The chain runs to 217 residues: Large ribosomal subunit protein uL1 (217 aa).

Belongs to the universal ribosomal protein uL1 family. As to quaternary structure, part of the 50S ribosomal subunit.

Functionally, binds directly to 23S rRNA. Probably involved in E site tRNA release. Protein L1 is also a translational repressor protein, it controls the translation of its operon by binding to its mRNA. In Thermoplasma acidophilum (strain ATCC 25905 / DSM 1728 / JCM 9062 / NBRC 15155 / AMRC-C165), this protein is Large ribosomal subunit protein uL1.